The chain runs to 868 residues: MSKSLVIVESPAKAKTINKYLGSQYVVKSSVGHIRDLPTVGSSTGEKAKPISTKGMDAEEKAKIKAEKERNALVKRMGIDPYHDWKANYQILPGKEKVVSELKSLAKKADHIYLATDLDREGEAIAWHLREVIGGNDDRFSRVVFNEITKNAIKQAFEKPEQLNMDRVNAQQTRRFLDRVVGFMVSPLLWKKVARGLSAGRVQSVAVKLLVEREREIKAFQPEEYWEVAVLTNNQNKQAIRLDVTDYKGKKFDPKNQKEAQSAVDFLNVSDYVVTDLETKPTSSRPRAPFITSTLQQTASTRLGFGVKKTMMLAQRLYEAGYITYMRTDSTNLSQDALNMARTYIENHFGAQYLPEKPNFYSSKENAQEAHEAIRPSDIRALPESLEGMEKDAVRLYDLIWCQFLACQMPPAQYDSSTLTVTAGDYTLKAKGRILRFDGWTKVLPQIGKNPEDQELPSVTVSEKLALKEVQPTQHFTKPPARFTEAALVKELEKRGIGRPSTYAAIISTIQERGYVRTENRRFYAEKMGEIVTDRLNESFGELMNYDFTANMEDTLDKIASGSVNWKTELNQFFKDFSSQLSKAELDELEGGMRPNSLVETDIKCPTCGRNMAIRTASTGVFLGCTGYALPPKERCKTTINLIPEAELLNVLDESSETKALMDRKRCTKCGTAMDSYVIDAHRKIHICGNNPNCDGYLIEEGSFKIKGYDGPVVECDKCGADMHLKLGRFGKYMGCTNCDNTRKILKNGEVAPPKEEPVHFPELKCEKSDAYFVLRDGASGVFMSAHNFPKSRETRPVKIAELVQYRERLPEKLAYLADAPQKDPEENEAIVRFSRKEKKQYVTSEKEGKATKWIVDFTNGKWVERKK.

The region spanning 3–148 is the Toprim domain; that stretch reads KSLVIVESPA…RFSRVVFNEI (146 aa). Mg(2+) is bound by residues E9 and D117. The region spanning 164–581 is the Topo IA-type catalytic domain; sequence NMDRVNAQQT…QFFKDFSSQL (418 aa). The interaction with DNA stretch occupies residues 198–203; it reads SAGRVQ. Y325 acts as the O-(5'-phospho-DNA)-tyrosine intermediate in catalysis. 3 C4-type zinc fingers span residues 605–636, 667–694, and 716–739; these read CPTCGRNMAIRTASTGVFLGCTGYALPPKERC, CTKCGTAMDSYVIDAHRKIHICGNNPNC, and CDKCGADMHLKLGRFGKYMGCTNC.

It belongs to the type IA topoisomerase family. In terms of assembly, monomer. Mg(2+) is required as a cofactor.

It carries out the reaction ATP-independent breakage of single-stranded DNA, followed by passage and rejoining.. Its function is as follows. Releases the supercoiling and torsional tension of DNA, which is introduced during the DNA replication and transcription, by transiently cleaving and rejoining one strand of the DNA duplex. Introduces a single-strand break via transesterification at a target site in duplex DNA. The scissile phosphodiester is attacked by the catalytic tyrosine of the enzyme, resulting in the formation of a DNA-(5'-phosphotyrosyl)-enzyme intermediate and the expulsion of a 3'-OH DNA strand. The free DNA strand then undergoes passage around the unbroken strand, thus removing DNA supercoils. Finally, in the religation step, the DNA 3'-OH attacks the covalent intermediate to expel the active-site tyrosine and restore the DNA phosphodiester backbone. The polypeptide is DNA topoisomerase 1 (Haemophilus influenzae (strain ATCC 51907 / DSM 11121 / KW20 / Rd)).